A 289-amino-acid polypeptide reads, in one-letter code: Oxaloacetate decarboxylase (289 aa).

Ser-50 contacts substrate. Mg(2+) is bound at residue Asp-88. Positions 159 and 235 each coordinate substrate.

The protein belongs to the isocitrate lyase/PEP mutase superfamily. Oxaloacetate decarboxylase family. Homotetramer; dimer of dimers. The cofactor is Mg(2+).

The catalysed reaction is oxaloacetate + H(+) = pyruvate + CO2. Functionally, catalyzes the decarboxylation of oxaloacetate into pyruvate. Seems to play a role in maintaining cellular concentrations of bicarbonate and pyruvate. The protein is Oxaloacetate decarboxylase of Pseudomonas syringae pv. tomato (strain ATCC BAA-871 / DC3000).